Reading from the N-terminus, the 258-residue chain is Trans-aconitate 2-methyltransferase (258 aa).

This sequence belongs to the methyltransferase superfamily. Tam family.

It is found in the cytoplasm. It catalyses the reaction trans-aconitate + S-adenosyl-L-methionine = (E)-3-(methoxycarbonyl)pent-2-enedioate + S-adenosyl-L-homocysteine. Functionally, catalyzes the S-adenosylmethionine monomethyl esterification of trans-aconitate. The protein is Trans-aconitate 2-methyltransferase of Deinococcus radiodurans (strain ATCC 13939 / DSM 20539 / JCM 16871 / CCUG 27074 / LMG 4051 / NBRC 15346 / NCIMB 9279 / VKM B-1422 / R1).